A 65-amino-acid polypeptide reads, in one-letter code: EGSGGSGSSGNFTTGSNVRMSSVTNTSNAGTGTSAGDNSAGGNGSGNSNSAPAVTVTLTESLLNK.

A disordered region spans residues Glu-1–Lys-65. The span at Val-18–Asn-28 shows a compositional bias: polar residues. Low complexity predominate over residues Ala-29–Asn-38. Residues Val-56–Lys-65 show a composition bias toward polar residues.

Forms a heterodimer with timeless (TIM); the complex then translocates into the nucleus. Phosphorylated with a circadian rhythmicity, probably by the double-time protein (dbt). Phosphorylation could be implicated in the stability of per monomer and in the formation of heterodimer per-tim.

It localises to the nucleus. The protein localises to the cytoplasm. The protein resides in the perinuclear region. Essential for biological clock functions. Determines the period length of circadian and ultradian rhythms; an increase in PER dosage leads to shortened circadian rhythms and a decrease leads to lengthened circadian rhythms. Essential for the circadian rhythmicity of locomotor activity, eclosion behavior, and for the rhythmic component of the male courtship song that originates in the thoracic nervous system. The biological cycle depends on the rhythmic formation and nuclear localization of the TIM-PER complex. Light induces the degradation of TIM, which promotes elimination of PER. Nuclear activity of the heterodimer coordinatively regulates PER and TIM transcription through a negative feedback loop. Behaves as a negative element in circadian transcriptional loop. Does not appear to bind DNA, suggesting indirect transcriptional inhibition. The sequence is that of Period circadian protein (per) from Drosophila mojavensis (Fruit fly).